We begin with the raw amino-acid sequence, 207 residues long: dTTP/UTP pyrophosphatase (207 aa).

Residue aspartate 79 is the Proton acceptor of the active site.

It belongs to the Maf family. YhdE subfamily. A divalent metal cation serves as cofactor.

The protein resides in the cytoplasm. It catalyses the reaction dTTP + H2O = dTMP + diphosphate + H(+). The catalysed reaction is UTP + H2O = UMP + diphosphate + H(+). Its function is as follows. Nucleoside triphosphate pyrophosphatase that hydrolyzes dTTP and UTP. May have a dual role in cell division arrest and in preventing the incorporation of modified nucleotides into cellular nucleic acids. In Rhodopseudomonas palustris (strain ATCC BAA-98 / CGA009), this protein is dTTP/UTP pyrophosphatase.